We begin with the raw amino-acid sequence, 67 residues long: Alpha-conotoxin G1.5 (67 aa).

Residues 1-21 (MGMRMMFTVFLLVALATTVVS) form the signal peptide. Residues 22-47 (FTSDRASDRRNAAVKAFDLISSTVKK) constitute a propeptide that is removed on maturation. 2 cysteine pairs are disulfide-bonded: C49–C55 and C50–C63. Q65 carries the post-translational modification Glutamine amide.

Belongs to the conotoxin A superfamily. In terms of tissue distribution, expressed by the venom duct.

It localises to the secreted. Functionally, alpha-conotoxins act on postsynaptic membranes, they bind to the nicotinic acetylcholine receptors (nAChR) and thus inhibit them. Globular isomer (C1-C3; C2-C4) selectively inhibits neuronal (non-muscle) nAChR subtypes particularly human alpha-3-beta-2/CHRNA3-CHRNB2 (IC(50)=35.7 nM) and alpha-9-alpha-10/CHRNA9-CHRNA10 nAChRs (IC(50)=569 nM), while the ribbon isomer (C1-C4; C2-C3) shows weak inhibition on alpha-3-beta-2/CHRNA3-CHRNB2, but not on all other receptors tested. This Conus geographus (Geography cone) protein is Alpha-conotoxin G1.5.